Here is a 508-residue protein sequence, read N- to C-terminus: Photosystem II CP47 reaction center protein (508 aa).

The next 6 helical transmembrane spans lie at 21-36, 101-115, 140-156, 203-218, 237-252, and 457-472; these read SVHI…WAGS, IVFS…IWHW, GIHL…FGAF, IAAG…FHLS, VLSS…AFVV, and SFAL…HGAR.

The protein belongs to the PsbB/PsbC family. PsbB subfamily. In terms of assembly, PSII is composed of 1 copy each of membrane proteins PsbA, PsbB, PsbC, PsbD, PsbE, PsbF, PsbH, PsbI, PsbJ, PsbK, PsbL, PsbM, PsbT, PsbX, PsbY, PsbZ, Psb30/Ycf12, at least 3 peripheral proteins of the oxygen-evolving complex and a large number of cofactors. It forms dimeric complexes. Binds multiple chlorophylls. PSII binds additional chlorophylls, carotenoids and specific lipids. serves as cofactor.

Its subcellular location is the plastid. The protein resides in the chloroplast thylakoid membrane. One of the components of the core complex of photosystem II (PSII). It binds chlorophyll and helps catalyze the primary light-induced photochemical processes of PSII. PSII is a light-driven water:plastoquinone oxidoreductase, using light energy to abstract electrons from H(2)O, generating O(2) and a proton gradient subsequently used for ATP formation. This is Photosystem II CP47 reaction center protein from Atropa belladonna (Belladonna).